Reading from the N-terminus, the 283-residue chain is ATP phosphoribosyltransferase (283 aa).

The protein belongs to the ATP phosphoribosyltransferase family. Long subfamily. Mg(2+) serves as cofactor.

Its subcellular location is the cytoplasm. The catalysed reaction is 1-(5-phospho-beta-D-ribosyl)-ATP + diphosphate = 5-phospho-alpha-D-ribose 1-diphosphate + ATP. It participates in amino-acid biosynthesis; L-histidine biosynthesis; L-histidine from 5-phospho-alpha-D-ribose 1-diphosphate: step 1/9. Its activity is regulated as follows. Feedback inhibited by histidine. Catalyzes the condensation of ATP and 5-phosphoribose 1-diphosphate to form N'-(5'-phosphoribosyl)-ATP (PR-ATP). Has a crucial role in the pathway because the rate of histidine biosynthesis seems to be controlled primarily by regulation of HisG enzymatic activity. The sequence is that of ATP phosphoribosyltransferase from Bifidobacterium longum (strain NCC 2705).